We begin with the raw amino-acid sequence, 245 residues long: 1-(5-phosphoribosyl)-5-[(5-phosphoribosylamino)methylideneamino] imidazole-4-carboxamide isomerase (245 aa).

The active-site Proton acceptor is the Asp7. The active-site Proton donor is Asp129.

This sequence belongs to the HisA/HisF family.

The protein resides in the cytoplasm. It carries out the reaction 1-(5-phospho-beta-D-ribosyl)-5-[(5-phospho-beta-D-ribosylamino)methylideneamino]imidazole-4-carboxamide = 5-[(5-phospho-1-deoxy-D-ribulos-1-ylimino)methylamino]-1-(5-phospho-beta-D-ribosyl)imidazole-4-carboxamide. The protein operates within amino-acid biosynthesis; L-histidine biosynthesis; L-histidine from 5-phospho-alpha-D-ribose 1-diphosphate: step 4/9. This is 1-(5-phosphoribosyl)-5-[(5-phosphoribosylamino)methylideneamino] imidazole-4-carboxamide isomerase from Escherichia coli O45:K1 (strain S88 / ExPEC).